The chain runs to 107 residues: Putative double-stranded DNA mimic protein HS_0995 (107 aa).

It belongs to the putative dsDNA mimic protein family.

Its function is as follows. May act as a double-stranded DNA (dsDNA) mimic. Probably regulates the activity of a dsDNA-binding protein. The protein is Putative double-stranded DNA mimic protein HS_0995 of Histophilus somni (strain 129Pt) (Haemophilus somnus).